We begin with the raw amino-acid sequence, 120 residues long: UPF0145 protein Mboo_1021 (120 aa).

Belongs to the UPF0145 family.

This is UPF0145 protein Mboo_1021 from Methanoregula boonei (strain DSM 21154 / JCM 14090 / 6A8).